The chain runs to 94 residues: Integration host factor subunit beta (94 aa).

The protein belongs to the bacterial histone-like protein family. In terms of assembly, heterodimer of an alpha and a beta chain.

In terms of biological role, this protein is one of the two subunits of integration host factor, a specific DNA-binding protein that functions in genetic recombination as well as in transcriptional and translational control. This is Integration host factor subunit beta from Yersinia enterocolitica serotype O:8 / biotype 1B (strain NCTC 13174 / 8081).